Here is a 311-residue protein sequence, read N- to C-terminus: Acetyl-coenzyme A carboxylase carboxyl transferase subunit alpha (311 aa).

Positions 36-286 constitute a CoA carboxyltransferase C-terminal domain; the sequence is NLSKEISKVY…ANYFISELAE (251 aa).

Belongs to the AccA family. In terms of assembly, acetyl-CoA carboxylase is a heterohexamer composed of biotin carboxyl carrier protein (AccB), biotin carboxylase (AccC) and two subunits each of ACCase subunit alpha (AccA) and ACCase subunit beta (AccD).

Its subcellular location is the cytoplasm. The catalysed reaction is N(6)-carboxybiotinyl-L-lysyl-[protein] + acetyl-CoA = N(6)-biotinyl-L-lysyl-[protein] + malonyl-CoA. It functions in the pathway lipid metabolism; malonyl-CoA biosynthesis; malonyl-CoA from acetyl-CoA: step 1/1. Its function is as follows. Component of the acetyl coenzyme A carboxylase (ACC) complex. First, biotin carboxylase catalyzes the carboxylation of biotin on its carrier protein (BCCP) and then the CO(2) group is transferred by the carboxyltransferase to acetyl-CoA to form malonyl-CoA. The sequence is that of Acetyl-coenzyme A carboxylase carboxyl transferase subunit alpha from Campylobacter concisus (strain 13826).